The chain runs to 198 residues: Ribonuclease HII (198 aa).

The RNase H type-2 domain maps to 11–198 (NLIAGVDEVG…GPVKRVLGLV (188 aa)). 3 residues coordinate a divalent metal cation: Asp17, Glu18, and Asp109.

It belongs to the RNase HII family. The cofactor is Mn(2+). Mg(2+) is required as a cofactor.

The protein localises to the cytoplasm. It catalyses the reaction Endonucleolytic cleavage to 5'-phosphomonoester.. Its function is as follows. Endonuclease that specifically degrades the RNA of RNA-DNA hybrids. The polypeptide is Ribonuclease HII (Yersinia pseudotuberculosis serotype O:1b (strain IP 31758)).